The primary structure comprises 257 residues: Snake venom serine proteinase 11 (257 aa).

A signal peptide spans 1–18 (MVLIRVLANLLILQLSYA). Residues 19–24 (QKSSEL) constitute a propeptide that is removed on maturation. The Peptidase S1 domain occupies 25–248 (VVGGDECNIN…YTEWIQSIIT (224 aa)). 6 disulfide bridges follow: Cys-31/Cys-162, Cys-49/Cys-65, Cys-97/Cys-255, Cys-141/Cys-209, Cys-173/Cys-188, and Cys-199/Cys-224. Catalysis depends on charge relay system residues His-64 and Asp-109. A glycan (N-linked (GlcNAc...) asparagine) is linked at Asn-120. Residue Ser-203 is the Charge relay system of the active site.

Belongs to the peptidase S1 family. Snake venom subfamily. Monomer. In terms of tissue distribution, expressed by the venom gland.

It localises to the secreted. Its function is as follows. Snake venom serine protease that may act in the hemostasis system of the prey. This chain is Snake venom serine proteinase 11, found in Crotalus adamanteus (Eastern diamondback rattlesnake).